The primary structure comprises 245 residues: Uridylate kinase (245 aa).

15–18 (KLSG) is a binding site for ATP. Residues 23–28 (GDEGFG) form an involved in allosteric activation by GTP region. Gly57 lines the UMP pocket. 2 residues coordinate ATP: Gly58 and Arg62. UMP contacts are provided by residues Asp77 and 138–145 (TGNPFCTT). Thr165, Tyr171, and Asp174 together coordinate ATP.

Belongs to the UMP kinase family. In terms of assembly, homohexamer.

Its subcellular location is the cytoplasm. The catalysed reaction is UMP + ATP = UDP + ADP. The protein operates within pyrimidine metabolism; CTP biosynthesis via de novo pathway; UDP from UMP (UMPK route): step 1/1. Its activity is regulated as follows. Allosterically activated by GTP. Inhibited by UTP. In terms of biological role, catalyzes the reversible phosphorylation of UMP to UDP. In Shewanella sp. (strain W3-18-1), this protein is Uridylate kinase.